The following is a 179-amino-acid chain: Large ribosomal subunit protein uL5 (179 aa).

The protein belongs to the universal ribosomal protein uL5 family. As to quaternary structure, part of the 50S ribosomal subunit; part of the 5S rRNA/L5/L18/L25 subcomplex. Contacts the 5S rRNA and the P site tRNA. Forms a bridge to the 30S subunit in the 70S ribosome.

In terms of biological role, this is one of the proteins that bind and probably mediate the attachment of the 5S RNA into the large ribosomal subunit, where it forms part of the central protuberance. In the 70S ribosome it contacts protein S13 of the 30S subunit (bridge B1b), connecting the 2 subunits; this bridge is implicated in subunit movement. Contacts the P site tRNA; the 5S rRNA and some of its associated proteins might help stabilize positioning of ribosome-bound tRNAs. This Stutzerimonas stutzeri (strain A1501) (Pseudomonas stutzeri) protein is Large ribosomal subunit protein uL5.